Reading from the N-terminus, the 205-residue chain is Alpha-1-acid glycoprotein (205 aa).

The N-terminal stretch at 1-18 is a signal peptide; the sequence is MALHMVLVVLSLLPLLEA. 6 N-linked (GlcNAc...) asparagine glycosylation sites follow: asparagine 25, asparagine 34, asparagine 76, asparagine 94, asparagine 104, and asparagine 134. A disulfide bridge links cysteine 91 with cysteine 183.

It belongs to the calycin superfamily. Lipocalin family.

It is found in the secreted. Functionally, functions as a transport protein in the blood stream. Binds various ligands in the interior of its beta-barrel domain. Appears to function in modulating the activity of the immune system during the acute-phase reaction. This is Alpha-1-acid glycoprotein (Orm1) from Rattus norvegicus (Rat).